Here is a 1693-residue protein sequence, read N- to C-terminus: Serine protease filzig (1693 aa).

The Cytoplasmic portion of the chain corresponds to 1–47; that stretch reads MFKWVTPASTATLSRCTLPATTAATTTTTAMAATRTATTTTRTTRPQ. The helical; Signal-anchor for type II membrane protein transmembrane segment at 48–68 threads the bilayer; sequence LLSIALTSLIIIVASFVPTTS. At 69–1693 the chain is on the extracellular side; the sequence is GFRSIETNGG…PWLRSITGVK (1625 aa). Disordered regions lie at residues 170-198, 212-321, 352-465, and 477-524; these read QQSAAQSSFESYGEQQQSLSEEQVAQQPS, QQLD…NDDF, GLQD…THPG, and STGY…TTVS. 2 stretches are compositionally biased toward polar residues: residues 178–198 and 212–222; these read FESYGEQQQSLSEEQVAQQPS and QQLDSSSSISP. 2 stretches are compositionally biased toward low complexity: residues 230–241 and 252–268; these read EPQQQEYQSESE and TSSSSTEATQSQSSSAS. Residues 274–294 show a composition bias toward polar residues; it reads EPSQPADASNDQTTQKINKQP. 3 stretches are compositionally biased toward low complexity: residues 358–404, 422–431, and 488–501; these read SSES…PTQK, QQKPQQVAKP, and EPPKQQQQQQPAEQ. Residues 502 to 524 show a composition bias toward polar residues; it reads SYISSSTSAKRPTTGHNSPTTVS. N-linked (GlcNAc...) asparagine glycans are attached at residues Asn-541 and Asn-582. Disordered regions lie at residues 615–635, 752–1007, and 1057–1090; these read QDASAAVSQSAEMPTARPGYG, HYNP…PPAT, and YAHRPTSSGSYGHKKPGFVQINGTPKPPRPTVLI. Residues 771 to 799 show a composition bias toward polar residues; that stretch reads SVSSHTTKVQEQMDETSNGYQQSETTSGY. Over residues 836-847 the composition is skewed to basic residues; it reads PRPKPSTKRPAV. Polar residues-rich tracts occupy residues 951 to 962 and 989 to 1000; these read QYDQPSAPSASY and KPISTSYVTGPS. Residues Asn-1215 and Asn-1272 are each glycosylated (N-linked (GlcNAc...) asparagine). 3 stretches are compositionally biased toward low complexity: residues 1297 to 1307, 1331 to 1353, and 1362 to 1376; these read PVRTATTTRPK, TTTRKPATRRTTVAAKVTTTTRR, and RVSSTVKTTTVSSAR. The tract at residues 1297 to 1435 is disordered; it reads PVRTATTTRP…TPNLAFHSPS (139 aa). The span at 1380 to 1391 shows a compositional bias: acidic residues; it reads DEIVDEEDEEDV. The 243-residue stretch at 1449–1691 folds into the Peptidase S1 domain; it reads IVGGKGSTFG…YKPWLRSITG (243 aa). Cys-1480 and Cys-1496 form a disulfide bridge. Catalysis depends on charge relay system residues His-1495 and Asp-1544. 2 disulfide bridges follow: Cys-1608–Cys-1627 and Cys-1638–Cys-1667. Ser-1642 serves as the catalytic Charge relay system.

It belongs to the peptidase S1 family.

It localises to the cell membrane. Its function is as follows. Probable endopeptidase. In tracheal terminal cells, acts downstream of ich to regulate seamless tube growth and/or maintenance probably by processing lumenal matrix proteins. This Drosophila melanogaster (Fruit fly) protein is Serine protease filzig.